A 156-amino-acid polypeptide reads, in one-letter code: 3-dehydroquinate dehydratase (156 aa).

The Proton acceptor role is filled by Tyr-31. Positions 83, 89, and 96 each coordinate substrate. His-109 functions as the Proton donor in the catalytic mechanism. Substrate is bound by residues 110–111 and Arg-120; that span reads LS.

This sequence belongs to the type-II 3-dehydroquinase family. In terms of assembly, homododecamer.

The catalysed reaction is 3-dehydroquinate = 3-dehydroshikimate + H2O. The protein operates within metabolic intermediate biosynthesis; chorismate biosynthesis; chorismate from D-erythrose 4-phosphate and phosphoenolpyruvate: step 3/7. Catalyzes a trans-dehydration via an enolate intermediate. In Chromobacterium violaceum (strain ATCC 12472 / DSM 30191 / JCM 1249 / CCUG 213 / NBRC 12614 / NCIMB 9131 / NCTC 9757 / MK), this protein is 3-dehydroquinate dehydratase.